The primary structure comprises 467 residues: Hydroxyacid-oxoacid transhydrogenase, mitochondrial (467 aa).

N6-acetyllysine is present on lysine 445. Phosphoserine is present on serine 452.

This sequence belongs to the iron-containing alcohol dehydrogenase family. Hydroxyacid-oxoacid transhydrogenase subfamily.

It localises to the mitochondrion. The catalysed reaction is (S)-3-hydroxybutanoate + 2-oxoglutarate = (R)-2-hydroxyglutarate + acetoacetate. It carries out the reaction 4-hydroxybutanoate + 2-oxoglutarate = (R)-2-hydroxyglutarate + succinate semialdehyde. Its function is as follows. Catalyzes the cofactor-independent reversible oxidation of gamma-hydroxybutyrate (GHB) to succinic semialdehyde (SSA) coupled to reduction of 2-ketoglutarate (2-KG) to D-2-hydroxyglutarate (D-2-HG). L-3-hydroxybutyrate (L-3-OHB) is also a substrate for HOT when using 2-KG as hydrogen acceptor, resulting in the formation of D-2-HG. This chain is Hydroxyacid-oxoacid transhydrogenase, mitochondrial (ADHFE1), found in Pongo abelii (Sumatran orangutan).